The following is a 150-amino-acid chain: Molybdopterin synthase catalytic subunit (150 aa).

Substrate contacts are provided by residues Lys-37–Arg-39, His-103–Arg-104, Lys-119, and Lys-126–Glu-128. Residue Lys-119 forms a Glycyl lysine isopeptide (Lys-Gly) (interchain with G-Cter in MoaD) linkage.

This sequence belongs to the MoaE family. Heterotetramer of 2 MoaD subunits and 2 MoaE subunits. Also stable as homodimer. The enzyme changes between these two forms during catalysis.

The enzyme catalyses 2 [molybdopterin-synthase sulfur-carrier protein]-C-terminal-Gly-aminoethanethioate + cyclic pyranopterin phosphate + H2O = molybdopterin + 2 [molybdopterin-synthase sulfur-carrier protein]-C-terminal Gly-Gly + 2 H(+). It functions in the pathway cofactor biosynthesis; molybdopterin biosynthesis. Converts molybdopterin precursor Z to molybdopterin. This requires the incorporation of two sulfur atoms into precursor Z to generate a dithiolene group. The sulfur is provided by MoaD. The polypeptide is Molybdopterin synthase catalytic subunit (moaE) (Escherichia coli (strain K12)).